A 277-amino-acid polypeptide reads, in one-letter code: Putative protein-disulfide oxidoreductase RC0029 (277 aa).

A signal peptide spans 1–22 (MRSIFIILIFLLFLSSCSEEKA). Residues 34-80 (EHETQNNETSKATNQEAVNSENTTESIVPANDNNQTDEVSTPASQKQ) form a disordered region. Residues 39–80 (NNETSKATNQEAVNSENTTESIVPANDNNQTDEVSTPASQKQ) show a composition bias toward polar residues. The 190-residue stretch at 76 to 265 (ASQKQKNPAI…ISTAVDKALE (190 aa)) folds into the Thioredoxin domain. Residues C118 and C121 are joined by a disulfide bond.

It belongs to the thioredoxin family. DsbA subfamily.

It localises to the periplasm. May be required for disulfide bond formation in some proteins. This Rickettsia conorii (strain ATCC VR-613 / Malish 7) protein is Putative protein-disulfide oxidoreductase RC0029.